The primary structure comprises 521 residues: Chromaffin granule amine transporter (521 aa).

The Cytoplasmic portion of the chain corresponds to 1-21 (MLQVVLGAPQRLLKEGRQSRK). Residues 22-42 (LVLVVVFVALLLDNMLLTVVV) traverse the membrane as a helical segment. Residues 43–135 (PIVPTFLYAT…IEFLEEENVR (93 aa)) are Lumenal, vesicle-facing. 3 N-linked (GlcNAc...) asparagine glycosylation sites follow: Asn58, Asn87, and Asn104. The chain crosses the membrane as a helical span at residues 136-155 (IGILFASKALMQLLVNPFVG). At 156–164 (PLTNRIGYH) the chain is on the cytoplasmic side. The chain crosses the membrane as a helical span at residues 165 to 185 (IPMFVGFMIMFLSTLMFAFSG). At 186-194 (TYALLFVAR) the chain is on the lumenal, vesicle side. Residues 195–215 (TLQGIGSSFSSVAGLGMLASV) traverse the membrane as a helical segment. At 216–224 (YTDNYERGR) the chain is on the cytoplasmic side. The helical transmembrane segment at 225–247 (AMGIALGGLALGLLVGAPFGSVM) threads the bilayer. Residues 248–253 (YEFVGK) lie on the Lumenal, vesicle side of the membrane. A helical membrane pass occupies residues 254–276 (SSPFLILAFLALLDGALQLCILW). At 277 to 296 (PSKVSPESAMGTSLLTLLKD) the chain is on the cytoplasmic side. The helical transmembrane segment at 297-316 (PYILVAAGSICLANMGVAIL) threads the bilayer. Over 317 to 332 (EPTLPIWMMQTMCSPE) the chain is Lumenal, vesicle. The helical transmembrane segment at 333-357 (WQLGLAFLPASVAYLIGTNLFGVLA) threads the bilayer. Residues 358-362 (NKMGR) are Cytoplasmic-facing. A helical membrane pass occupies residues 363–383 (WLCSLVGMVAVGISLLCVPLA). Residues 384-394 (HNIFGLIGPNA) are Lumenal, vesicle-facing. A helical membrane pass occupies residues 395-415 (GLGFAIGMVDSSLMPIMGYLV). The Cytoplasmic portion of the chain corresponds to 416–419 (DLRH). Residues 420–440 (TSVYGSVYAIADVAFCVGFAI) traverse the membrane as a helical segment. Residues 441–445 (GPSTG) lie on the Lumenal, vesicle side of the membrane. The helical transmembrane segment at 446–467 (GVIVQVIGFPWLMVIIGTINII) threads the bilayer. Over 468-521 (YAPLCCFLQNPPAKEEKRAILSQECPTETQMYTFQKPTKAFPLGENSDDPSSGE) the chain is Cytoplasmic.

This sequence belongs to the major facilitator superfamily. Vesicular transporter family. As to expression, adrenal gland.

It is found in the cytoplasmic vesicle. The protein localises to the secretory vesicle membrane. It localises to the secretory vesicle. Its subcellular location is the synaptic vesicle membrane. It carries out the reaction serotonin(in) + 2 H(+)(out) = serotonin(out) + 2 H(+)(in). The catalysed reaction is (R)-noradrenaline(in) + 2 H(+)(out) = (R)-noradrenaline(out) + 2 H(+)(in). It catalyses the reaction dopamine(in) + 2 H(+)(out) = dopamine(out) + 2 H(+)(in). Strongly inhibited by reserpine, ketanserin and methamphetamine. Also inhibited weakly by tetrabenazine. In terms of biological role, electrogenic antiporter that exchanges one cationic monoamine with two intravesicular protons across the membrane of secretory and synaptic vesicles. Uses the electrochemical proton gradient established by the V-type proton-pump ATPase to accumulate high concentrations of monoamines inside the vesicles prior to their release via exocytosis. Transports catecholamines and indolamines with higher affinity for serotonin. Regulates the transvesicular monoaminergic gradient that determines the quantal size. Mediates presynaptic monoaminergic vesicle transport in the amygdala and prefrontal brain regions related with emotion processing in response to environmental stimuli. This is Chromaffin granule amine transporter (Slc18a1) from Rattus norvegicus (Rat).